The sequence spans 180 residues: uncharacterized protein (180 aa).

A signal peptide spans 1–21; sequence MKQCIAFMAILALSLSAISEA. Positions 23–81 are disordered; it reads GGRGVRSSGYSRPVATKPAPAPKQTQTQQQSQQPDATFGQQNMQNTATNTPNNPNNRLA. The span at 27-78 shows a compositional bias: low complexity; that stretch reads VRSSGYSRPVATKPAPAPKQTQTQQQSQQPDATFGQQNMQNTATNTPNNPNN.

This is an uncharacterized protein from Pasteurella multocida (strain Pm70).